The primary structure comprises 204 residues: MNLTMQLAVIVAVCLCLAEGAPDVRLTRTKQQRPTRGFKNVEMMTARGFGKRDRPHPRAERDVDHQAPSARPNRGTPTFKSPTVGIARDFGKRASQYGNEEEIRVTRGTFKPNSNILIARGYGKRTQLPQIDGVYGLDNFWEMLETSPEREVQEVDEKTLESIPLDWFVNEMLNNPDFARSVVRKFIDLNQDGMLSSEELLRNF.

The first 20 residues, 1 to 20 (MNLTMQLAVIVAVCLCLAEG), serve as a signal peptide directing secretion. Residues 21 to 35 (APDVRLTRTKQQRPT) constitute a propeptide that is removed on maturation. The interval 47–83 (RGFGKRDRPHPRAERDVDHQAPSARPNRGTPTFKSPT) is disordered. Phe49 is modified (phenylalanine amide). Over residues 50–65 (GKRDRPHPRAERDVDH) the composition is skewed to basic and acidic residues. A propeptide spanning residues 53–204 (DRPHPRAERD…LSSEELLRNF (152 aa)) is cleaved from the precursor.

Expressed extensively in the brain, frontal ganglion and terminal ganglion of the day 2 fifth instar larva (at protein level). Not expressed in the larval brain after day 4 of the fifth instar, or in the brain of the pupa or adult. Expression in the terminal ganglion is localized to cells in the posterior portion of the seventh neuromere of day 2 fifth instar larvae. In the pupa and adult expression is detected in the medial region of neuromere 6, the dorsal medial region of neuromere 7, and the posterior neuromere of the terminal ganglion (at protein level). In the frontal ganglion expression decreases in the wandering larvae and is present at low levels in during pupal ecdysis, but is not detected in the adult. Expressed in the subesophageal ganglion of day 2 fifth instar larva, but not at any time before or after day 2. Not expressed in the abdominal ganglia 1-6 of the day 2 fifth instar larva (at protein level). Expressed in the anterior neuromeres of the pterothoracic ganglion in pupa but not in adult (at protein level). Expressed in the unfused abdominal ganglia of day 10 pupae, and in pharate adult is expressed in median neurosecretory cells M1, M2 and M5, but not in median neurosecretory cells M3 and M4 (at protein level). Not expressed in the differentiated median neurosecretory cells M5 of the larva (at protein level). In the pharate adult brain isoform 3 is the predominant form, with lower levels of isoform 2 and very low levels of isoform 1 detected. In the pharate adult nerve cord isoform 3 is the predominant form, with lower levels of isoform 2 and no isoform 1 detected. In the pharate adult frontal ganglion isoform 3 is expressed, but not isoform 1 and isoform 2.

The protein resides in the secreted. Neuropeptide stimulator of juvenile hormone synthesis. Cardioregulatory neurohormone that increases heart beat rate in the adult but not in the larva. Inhibits active ion transport in the midgut of feeding fourth instar and day 2 fifth instar larva, but not in the midgut of pharate or wandering fifth instar larva. The protein is Allatotropin of Manduca sexta (Tobacco hawkmoth).